Reading from the N-terminus, the 571-residue chain is Zinc metalloproteinase nas-15 (571 aa).

Residues 1–15 (MREYVLIFLVAPVFA) form the signal peptide. An N-linked (GlcNAc...) asparagine glycan is attached at N92. The 194-residue stretch at 114-307 (NAIKNRLQLW…FKINTLYGCP (194 aa)) folds into the Peptidase M12A domain. 5 disulfides stabilise this stretch: C156/C306, C178/C197, C354/C388, C361/C381, and C370/C385. H205 is a binding site for Zn(2+). E206 is a catalytic residue. Positions 209 and 215 each coordinate Zn(2+). The ShKT 1 domain maps to 354–388 (CRNLRGDCDDLAKQGWCIRNPGWMRANCPISCGMC). Residues 407 to 420 (TTTARPQKPVTQPI) show a composition bias toward low complexity. The interval 407–426 (TTTARPQKPVTQPIQPLPPV) is disordered. Cystine bridges form between C437/C471, C444/C464, and C453/C468. One can recognise a ShKT 2 domain in the interval 437 to 471 (CEDLRVDCLVLVSQRYCKISQNFMKSYCAKSCGFC). Positions 500-530 (IRSRSPAPPVSTTTKAAPTTSTTSAAPYSPT) are disordered. Over residues 509 to 527 (VSTTTKAAPTTSTTSAAPY) the composition is skewed to low complexity. 3 cysteine pairs are disulfide-bonded: C536–C571, C543–C564, and C552–C568. The ShKT 3 domain maps to 536-571 (CSDRKHFCSHWKSAGFCEGIFMNYMKKNCPASCGLC).

It depends on Zn(2+) as a cofactor. As to expression, expressed in pharyngeal marginal cells and muscles.

Its subcellular location is the secreted. Functionally, metalloprotease. The chain is Zinc metalloproteinase nas-15 (nas-15) from Caenorhabditis elegans.